The following is a 950-amino-acid chain: Valine--tRNA ligase, mitochondrial (950 aa).

The transit peptide at 1 to 90 (MFHFQRSFSS…ITIQDALARF (90 aa)) directs the protein to the mitochondrion. The short motif at 67–77 (PNITGKLHIGH) is the 'HIGH' region element. The 'KMSKS' region motif lies at 556–560 (KMSKS). Lys-559 contributes to the ATP binding site.

This sequence belongs to the class-I aminoacyl-tRNA synthetase family.

It localises to the mitochondrion. The enzyme catalyses tRNA(Val) + L-valine + ATP = L-valyl-tRNA(Val) + AMP + diphosphate. The polypeptide is Valine--tRNA ligase, mitochondrial (vas1) (Schizosaccharomyces pombe (strain 972 / ATCC 24843) (Fission yeast)).